A 370-amino-acid chain; its full sequence is Psilocybin cluster transcription regulator (370 aa).

Disordered stretches follow at residues 1–39 (MAPT…ADIS) and 102–221 (YQTG…RRRR). The span at 143–152 (IQHQDQQQSG) shows a compositional bias: polar residues. Low complexity predominate over residues 183 to 202 (TSTSTPSGGRRGGRSATMGS). The span at 204 to 218 (EWSRQRKDNHKEVER) shows a compositional bias: basic and acidic residues. Residues 208–221 (QRKDNHKEVERRRR) form a basic motif region. Residues 208–258 (QRKDNHKEVERRRRGNINEGINELGRIVPSGSGEKAKGAILSRAVQYIHHL) form the bHLH domain. The helix-loop-helix motif stretch occupies residues 222–258 (GNINEGINELGRIVPSGSGEKAKGAILSRAVQYIHHL). The segment at 317–370 (VSTAGAGSGAAKDESAAGTKRRSTDGADAAGTNVEGGNNDNAEGERDGKRQRTE) is disordered. Residues 359-370 (EGERDGKRQRTE) show a composition bias toward basic and acidic residues.

The protein localises to the nucleus. Functionally, transcription factor that may regulate the expression of the gene cluster that mediates the biosynthesis of psilocybin, a psychotropic tryptamine-derived natural product. The chain is Psilocybin cluster transcription regulator from Psilocybe cyanescens.